A 447-amino-acid polypeptide reads, in one-letter code: N-succinylarginine dihydrolase (447 aa).

Substrate-binding positions include 19 to 28 (AGLSFGNEAS), Asn110, and 137 to 138 (HR). Glu174 is an active-site residue. Arg212 provides a ligand contact to substrate. Residue His248 is part of the active site. Residues Asp250 and Asn359 each coordinate substrate. Cys365 (nucleophile) is an active-site residue.

Belongs to the succinylarginine dihydrolase family. As to quaternary structure, homodimer.

It carries out the reaction N(2)-succinyl-L-arginine + 2 H2O + 2 H(+) = N(2)-succinyl-L-ornithine + 2 NH4(+) + CO2. Its pathway is amino-acid degradation; L-arginine degradation via AST pathway; L-glutamate and succinate from L-arginine: step 2/5. In terms of biological role, catalyzes the hydrolysis of N(2)-succinylarginine into N(2)-succinylornithine, ammonia and CO(2). This is N-succinylarginine dihydrolase from Escherichia coli (strain SE11).